Consider the following 61-residue polypeptide: Double gene block protein 1 (61 aa).

Residues 15 to 45 (LAGNRGKQKTRRSVAKDAIRKPASDSTNGGN) are disordered. Residues 17 to 35 (GNRGKQKTRRSVAKDAIRK) form an RNA-binding region. Positions 28 to 37 (VAKDAIRKPA) are enriched in basic and acidic residues.

This sequence belongs to the carmovirus double gene block protein 1 family. In terms of assembly, homodimer.

Cell-to-cell movement. Displays RNA-binding activity. This chain is Double gene block protein 1, found in Carnation mottle virus (isolate China/Shanghai) (CarMV).